A 217-amino-acid polypeptide reads, in one-letter code: Transcriptional regulatory protein CutR (217 aa).

The Response regulatory domain occupies 2–116; sequence RVLVVEDEQL…ELIARVRALG (115 aa). The residue at position 51 (D51) is a 4-aspartylphosphate. The segment at residues 124–217 is a DNA-binding region (ompR/PhoB-type); it reads PPVLERAGIK…VTVPGSGYRI (94 aa).

Member of the two-component regulatory system CutS/CutR, involved in the regulation of copper metabolism. CutR suppresses a defective melC1 gene, encoding a putative copper-transfer gene, probably by altering copper metabolism. This chain is Transcriptional regulatory protein CutR (cutR), found in Streptomyces lividans.